The primary structure comprises 228 residues: MSPSILGRKIGMTQIFLEDGTAVPVTVVQAGPCHVLQVRSKDRDGYEAVQMGFEDKPRRLAKRSERGQVATIESKRSKKRSAAGIEAPAKADCEPQRFVREFRGSSEANVGDTLTVEQFNDVKKVDITGTSKGRGFAGVMKRHNFAGQRATHGVKKCHRHAGGTGMSASPSRTFKGKRMAGQYGNAKVTTRNLEVVRVDAENNLLMIRGAVPGPNGGFVSIRQTNKVG.

Residues 157–176 form a disordered region; sequence CHRHAGGTGMSASPSRTFKG.

The protein belongs to the universal ribosomal protein uL3 family. As to quaternary structure, part of the 50S ribosomal subunit. Forms a cluster with proteins L14 and L19.

In terms of biological role, one of the primary rRNA binding proteins, it binds directly near the 3'-end of the 23S rRNA, where it nucleates assembly of the 50S subunit. The sequence is that of Large ribosomal subunit protein uL3 from Rhodopirellula baltica (strain DSM 10527 / NCIMB 13988 / SH1).